Consider the following 158-residue polypeptide: Salt stress-responsive protein YocM (158 aa).

Positions 51-158 constitute a sHSP domain; that stretch reads GKGDASFPSM…GQAKTIVIDD (108 aa).

The protein belongs to the small heat shock protein (HSP20) family. In terms of assembly, forms homodimers, homotetramers and higher oligomers.

It is found in the cytoplasm. Its function is as follows. Part of the cellular protein quality control system with a specific role in salt stress response. May facilitate protein homeostasis, together with chemical chaperones that accumulate during the salt stress response. Increased levels of YocM protects against both heat and salt stress. In vitro, displays an unusual aggregase chaperone activity. The chain is Salt stress-responsive protein YocM (yocM) from Bacillus subtilis (strain 168).